Reading from the N-terminus, the 447-residue chain is MERKGIFIKVFSYTIIVLLLLVGVTATLFAQQFVSYFRAMEAQQTVKSYQPLVELIQNSDRLDMQEVAGLFHYNNQSFEFYIEDKEGSVLYATPNADTSNSVRPDFLYVVHRDDNISIVAQSKAGVGLLYQGLTIRGIVMIAIMVVFSLLCAYIFARQMTTPIKALADSANKMANLKEVPPPLERKDELGALAHDMHSMYIRLKETIARLEDEIAREHELEETQRYFFAAASHELKTPIAAVSVLLEGMLENIGDYKDHSKYLRECIKMMDRQGKTISEILELVSLNDGRIVPIAEPLDIGRTVAELLPDFQTLAEANNQRFVTDIPAGQIVLSDPKLIQKALSNVILNAVQNTPQGGEVRIWSEPGAEKYRLSVLNMGVHIDDTALSKLFIPFYRIDQARSRKSGRSGLGLAIVQKTLDAMSLQYALENTSDGVLFWLDLPPTSTL.

The next 2 helical transmembrane spans lie at valine 10–alanine 30 and glycine 137–phenylalanine 155. Positions arginine 157–alanine 208 constitute an HAMP domain. A Histidine kinase domain is found at alanine 230–serine 445. At histidine 233 the chain carries Phosphohistidine; by autocatalysis.

The protein resides in the cell membrane. It carries out the reaction ATP + protein L-histidine = ADP + protein N-phospho-L-histidine.. In terms of biological role, member of the two-component regulatory system VanSB/VanRB. Activates the transcription of vanSB, vanYB and vanW in response to vancomycin which results in vancomycin resistance. VanSB may activate VanRB by phosphorylation. May also act as a phospho-VanRB phosphatase. The sequence is that of Sensor protein VanSB (vanSB) from Enterococcus faecalis (strain ATCC 700802 / V583).